The sequence spans 155 residues: MNMQKLRIELGEETNDELYDLLLLADPSKDIVDEYLERGECYTAWAGDELAGVYVLLKTRPQTVEIVNIAVKESLQKKGFGKQLVLDAIEKAKKLGADTIEIGTGNSSIHQLSLYQKCGFRIQAIDHDFFLRHYDEDIFENGIQCRDMVRLYLDL.

Residues 6 to 155 form the N-acetyltransferase domain; that stretch reads LRIELGEETN…RDMVRLYLDL (150 aa). Residues 69–71, 77–82, and 111–117 contribute to the CoA site; these read IAV, KKGFGK, and QLSLYQK.

Probable N-acetyltransferase. This is an uncharacterized protein from Bacillus subtilis (strain 168).